Consider the following 344-residue polypeptide: tRNA N6-adenosine threonylcarbamoyltransferase (344 aa).

2 residues coordinate Fe cation: histidine 119 and histidine 123. Residues 141 to 145 (VVSGG), aspartate 174, glycine 187, aspartate 191, and asparagine 280 contribute to the substrate site. Residue aspartate 310 coordinates Fe cation.

The protein belongs to the KAE1 / TsaD family. The cofactor is Fe(2+).

It is found in the cytoplasm. It catalyses the reaction L-threonylcarbamoyladenylate + adenosine(37) in tRNA = N(6)-L-threonylcarbamoyladenosine(37) in tRNA + AMP + H(+). Functionally, required for the formation of a threonylcarbamoyl group on adenosine at position 37 (t(6)A37) in tRNAs that read codons beginning with adenine. Is involved in the transfer of the threonylcarbamoyl moiety of threonylcarbamoyl-AMP (TC-AMP) to the N6 group of A37, together with TsaE and TsaB. TsaD likely plays a direct catalytic role in this reaction. In Listeria monocytogenes serovar 1/2a (strain ATCC BAA-679 / EGD-e), this protein is tRNA N6-adenosine threonylcarbamoyltransferase.